A 447-amino-acid chain; its full sequence is Thiol-specific monooxygenase (447 aa).

FAD contacts are provided by residues 13 to 17 (GAGPS), Glu-38, 46 to 47 (VW), 91 to 92 (NT), and 137 to 138 (DV). 90-91 (TN) serves as a coordination point for NADP(+). 223–226 (SAND) is a binding site for NADP(+).

This sequence belongs to the FMO family. In terms of assembly, monomer. Requires FAD as cofactor.

Flavin-dependent oxidation of thiol-containing compounds. Probably required for the correct folding of disulfide-bonded proteins. The polypeptide is Thiol-specific monooxygenase (fmo1) (Schizosaccharomyces pombe (strain 972 / ATCC 24843) (Fission yeast)).